The following is a 144-amino-acid chain: 3-dehydroquinate dehydratase (144 aa).

The Proton acceptor role is filled by Tyr-22. 3 residues coordinate substrate: Asn-73, His-79, and Asp-86. His-99 serves as the catalytic Proton donor. Residues 100–101 (IS) and Arg-110 each bind substrate.

Belongs to the type-II 3-dehydroquinase family. In terms of assembly, homododecamer.

The enzyme catalyses 3-dehydroquinate = 3-dehydroshikimate + H2O. Its pathway is metabolic intermediate biosynthesis; chorismate biosynthesis; chorismate from D-erythrose 4-phosphate and phosphoenolpyruvate: step 3/7. Its function is as follows. Catalyzes a trans-dehydration via an enolate intermediate. This Mycobacteroides abscessus (strain ATCC 19977 / DSM 44196 / CCUG 20993 / CIP 104536 / JCM 13569 / NCTC 13031 / TMC 1543 / L948) (Mycobacterium abscessus) protein is 3-dehydroquinate dehydratase.